We begin with the raw amino-acid sequence, 369 residues long: 2-aminoethylphosphonate--pyruvate transaminase (369 aa).

Residue Lys193 is modified to N6-(pyridoxal phosphate)lysine.

The protein belongs to the class-V pyridoxal-phosphate-dependent aminotransferase family. PhnW subfamily. Homodimer. Requires pyridoxal 5'-phosphate as cofactor.

It carries out the reaction (2-aminoethyl)phosphonate + pyruvate = phosphonoacetaldehyde + L-alanine. Involved in phosphonate degradation. This Burkholderia pseudomallei (strain K96243) protein is 2-aminoethylphosphonate--pyruvate transaminase.